Consider the following 477-residue polypeptide: 3-succinoylsemialdehyde-pyridine dehydrogenase (477 aa).

Residue 202–208 (GDGPGVG) participates in NAD(+) binding. Catalysis depends on residues glutamate 246 and cysteine 280.

This sequence belongs to the aldehyde dehydrogenase family.

The catalysed reaction is 4-oxo-4-(pyridin-3-yl)butanal + NADP(+) + H2O = 4-oxo-4-(pyridin-3-yl)butanoate + NADPH + 2 H(+). It functions in the pathway alkaloid degradation; nicotine degradation. Catalyzes the dehydrogenation of 3-succinoylsemialdehyde-pyridine to 3-succinoyl-pyridine in the nicotine degradation pathway. The sequence is that of 3-succinoylsemialdehyde-pyridine dehydrogenase (ald) from Pseudomonas sp.